A 263-amino-acid chain; its full sequence is Hydroxyethylthiazole kinase (263 aa).

Met-41 is a binding site for substrate. 2 residues coordinate ATP: Arg-117 and Ser-163. Gly-190 serves as a coordination point for substrate.

It belongs to the Thz kinase family. Mg(2+) serves as cofactor.

It carries out the reaction 5-(2-hydroxyethyl)-4-methylthiazole + ATP = 4-methyl-5-(2-phosphooxyethyl)-thiazole + ADP + H(+). The protein operates within cofactor biosynthesis; thiamine diphosphate biosynthesis; 4-methyl-5-(2-phosphoethyl)-thiazole from 5-(2-hydroxyethyl)-4-methylthiazole: step 1/1. Its function is as follows. Catalyzes the phosphorylation of the hydroxyl group of 4-methyl-5-beta-hydroxyethylthiazole (THZ). The sequence is that of Hydroxyethylthiazole kinase from Lactiplantibacillus plantarum (strain ATCC BAA-793 / NCIMB 8826 / WCFS1) (Lactobacillus plantarum).